The sequence spans 354 residues: NADH-quinone oxidoreductase subunit H (354 aa).

8 helical membrane-spanning segments follow: residues 22 to 42 (ILIR…YLIL), 91 to 111 (YLIA…VIPF), 124 to 144 (LLYV…AGWA), 168 to 188 (MGFA…SAIV), 203 to 223 (ILSW…ISGV), 255 to 275 (LFFL…ALMF), 291 to 311 (IPGF…FIWI), and 326 to 346 (LGWK…AIWI).

The protein belongs to the complex I subunit 1 family. In terms of assembly, NDH-1 is composed of 14 different subunits. Subunits NuoA, H, J, K, L, M, N constitute the membrane sector of the complex.

It localises to the cell inner membrane. It carries out the reaction a quinone + NADH + 5 H(+)(in) = a quinol + NAD(+) + 4 H(+)(out). In terms of biological role, NDH-1 shuttles electrons from NADH, via FMN and iron-sulfur (Fe-S) centers, to quinones in the respiratory chain. The immediate electron acceptor for the enzyme in this species is believed to be ubiquinone. Couples the redox reaction to proton translocation (for every two electrons transferred, four hydrogen ions are translocated across the cytoplasmic membrane), and thus conserves the redox energy in a proton gradient. This subunit may bind ubiquinone. This chain is NADH-quinone oxidoreductase subunit H, found in Cupriavidus taiwanensis (strain DSM 17343 / BCRC 17206 / CCUG 44338 / CIP 107171 / LMG 19424 / R1) (Ralstonia taiwanensis (strain LMG 19424)).